A 160-amino-acid chain; its full sequence is Small ribosomal subunit protein uS7 (160 aa).

It belongs to the universal ribosomal protein uS7 family. Part of the 30S ribosomal subunit. Contacts proteins S9 and S11.

One of the primary rRNA binding proteins, it binds directly to 16S rRNA where it nucleates assembly of the head domain of the 30S subunit. Is located at the subunit interface close to the decoding center, probably blocks exit of the E-site tRNA. This Anaplasma phagocytophilum (strain HZ) protein is Small ribosomal subunit protein uS7.